A 504-amino-acid chain; its full sequence is Cytochrome P450 4A25 (504 aa).

Transmembrane regions (helical) follow at residues leucine 6 to leucine 26 and alanine 110 to glycine 130. Residue cysteine 451 coordinates heme.

This sequence belongs to the cytochrome P450 family. Requires heme as cofactor.

The protein resides in the endoplasmic reticulum membrane. The enzyme catalyses an omega-methyl-long-chain fatty acid + reduced [NADPH--hemoprotein reductase] + O2 = an omega-hydroxy-long-chain fatty acid + oxidized [NADPH--hemoprotein reductase] + H2O + H(+). Functionally, catalyzes the omega- and (omega-1)-hydroxylation of various fatty acids such as laurate and palmitate. Has no activity toward taurochenodeoxycholic acid. This chain is Cytochrome P450 4A25 (CYP4A25), found in Sus scrofa (Pig).